The sequence spans 226 residues: Ribosomal RNA small subunit methyltransferase G (226 aa).

S-adenosyl-L-methionine contacts are provided by residues Gly86, Leu91, 137–138 (VE), and Arg150.

This sequence belongs to the methyltransferase superfamily. RNA methyltransferase RsmG family.

It is found in the cytoplasm. The catalysed reaction is guanosine(527) in 16S rRNA + S-adenosyl-L-methionine = N(7)-methylguanosine(527) in 16S rRNA + S-adenosyl-L-homocysteine. Specifically methylates the N7 position of guanine in position 527 of 16S rRNA. This Polaromonas sp. (strain JS666 / ATCC BAA-500) protein is Ribosomal RNA small subunit methyltransferase G.